A 200-amino-acid polypeptide reads, in one-letter code: Large ribosomal subunit protein uL4 (200 aa).

A disordered region spans residues 38 to 68 (GRQGSKQQKTRSDVRGGGKRPWRQKGTGRAR). Positions 54 to 65 (GGKRPWRQKGTG) are enriched in basic residues.

The protein belongs to the universal ribosomal protein uL4 family. As to quaternary structure, part of the 50S ribosomal subunit.

Functionally, one of the primary rRNA binding proteins, this protein initially binds near the 5'-end of the 23S rRNA. It is important during the early stages of 50S assembly. It makes multiple contacts with different domains of the 23S rRNA in the assembled 50S subunit and ribosome. Forms part of the polypeptide exit tunnel. This Pseudomonas savastanoi pv. phaseolicola (strain 1448A / Race 6) (Pseudomonas syringae pv. phaseolicola (strain 1448A / Race 6)) protein is Large ribosomal subunit protein uL4.